Reading from the N-terminus, the 62-residue chain is Single-pass membrane and coiled-coil domain-containing protein 4 homolog (62 aa).

Positions 1–27 (MRQLPGKAAKETRKMKRERKQQNKEGH) are disordered. Positions 9–31 (AKETRKMKRERKQQNKEGHNRVV) form a coiled coil. A helical membrane pass occupies residues 30 to 50 (VVTVAIPVCLAVFVMLIVYVY).

This sequence belongs to the SMCO4 family.

It is found in the membrane. This chain is Single-pass membrane and coiled-coil domain-containing protein 4 homolog, found in Nematostella vectensis (Starlet sea anemone).